The following is a 382-amino-acid chain: Dual-specificity RNA methyltransferase RlmN (382 aa).

E94 (proton acceptor) is an active-site residue. The Radical SAM core domain maps to 100–336 (EANRGTLCVS…NTITRKTRGD (237 aa)). A disulfide bond links C107 and C342. [4Fe-4S] cluster-binding residues include C114, C118, and C121. Residues 168–169 (GE), S200, 222–224 (SLH), and N299 contribute to the S-adenosyl-L-methionine site. The active-site S-methylcysteine intermediate is C342.

It belongs to the radical SAM superfamily. RlmN family. [4Fe-4S] cluster is required as a cofactor.

The protein resides in the cytoplasm. It carries out the reaction adenosine(2503) in 23S rRNA + 2 reduced [2Fe-2S]-[ferredoxin] + 2 S-adenosyl-L-methionine = 2-methyladenosine(2503) in 23S rRNA + 5'-deoxyadenosine + L-methionine + 2 oxidized [2Fe-2S]-[ferredoxin] + S-adenosyl-L-homocysteine. It catalyses the reaction adenosine(37) in tRNA + 2 reduced [2Fe-2S]-[ferredoxin] + 2 S-adenosyl-L-methionine = 2-methyladenosine(37) in tRNA + 5'-deoxyadenosine + L-methionine + 2 oxidized [2Fe-2S]-[ferredoxin] + S-adenosyl-L-homocysteine. Its function is as follows. Specifically methylates position 2 of adenine 2503 in 23S rRNA and position 2 of adenine 37 in tRNAs. m2A2503 modification seems to play a crucial role in the proofreading step occurring at the peptidyl transferase center and thus would serve to optimize ribosomal fidelity. The protein is Dual-specificity RNA methyltransferase RlmN of Legionella pneumophila subsp. pneumophila (strain Philadelphia 1 / ATCC 33152 / DSM 7513).